Consider the following 159-residue polypeptide: 3-hydroxyacyl-[acyl-carrier-protein] dehydratase FabZ (159 aa).

The active site involves His65.

Belongs to the thioester dehydratase family. FabZ subfamily.

Its subcellular location is the cytoplasm. It catalyses the reaction a (3R)-hydroxyacyl-[ACP] = a (2E)-enoyl-[ACP] + H2O. Involved in unsaturated fatty acids biosynthesis. Catalyzes the dehydration of short chain beta-hydroxyacyl-ACPs and long chain saturated and unsaturated beta-hydroxyacyl-ACPs. The protein is 3-hydroxyacyl-[acyl-carrier-protein] dehydratase FabZ of Microcystis aeruginosa (strain NIES-843 / IAM M-2473).